The following is a 529-amino-acid chain: MTNLVPVGRALLSVSDKSGLLDLARALAELEVELISTGGTAATLRAAGLKVRDVAEVTGFPEMMDGRVKTLHPMVHGGLLALRDDDEHLVAMAAHGIEPIDLLVVNLYPFEAAVARGASYDDCIENIDIGGPAMIRAAAKNHRFVNVVTDTADYKALLDELRAHDGATTLAFRQKLALTAYSRTAAYDAAVSAWMAGALKSEAPRRRTFAGTLAQTMRYGENPHQKAAFYTDGSHRPGVATAKQWQGKELSYNNINDTDAAFELVAEFDPSEGPACVIVKHANPCGVARGATLAEAYGRAFDCDRVSAFGGIIALNQPLDAATAEKITEIFTEVVIAPGADEEARAIFAAKKNLRLLTTEALPDPLAPGLAFKQVAGGFLVQDRDAGHVDALDLKVVTKRAPSDAELADLLFAWTVAKHVKSNAIVYVKDGATVGVGAGQMSRVDSTRIAARKSQDMAQALGLAQPLTQGSVVASDAFFPFADGLLAAAEAGATAIIQPGGSMRDDEVIAAADEAGLAMVFTGQRHFRH.

An MGS-like domain is found at Thr-2–Thr-149.

It belongs to the PurH family.

It catalyses the reaction (6R)-10-formyltetrahydrofolate + 5-amino-1-(5-phospho-beta-D-ribosyl)imidazole-4-carboxamide = 5-formamido-1-(5-phospho-D-ribosyl)imidazole-4-carboxamide + (6S)-5,6,7,8-tetrahydrofolate. It carries out the reaction IMP + H2O = 5-formamido-1-(5-phospho-D-ribosyl)imidazole-4-carboxamide. It participates in purine metabolism; IMP biosynthesis via de novo pathway; 5-formamido-1-(5-phospho-D-ribosyl)imidazole-4-carboxamide from 5-amino-1-(5-phospho-D-ribosyl)imidazole-4-carboxamide (10-formyl THF route): step 1/1. It functions in the pathway purine metabolism; IMP biosynthesis via de novo pathway; IMP from 5-formamido-1-(5-phospho-D-ribosyl)imidazole-4-carboxamide: step 1/1. The chain is Bifunctional purine biosynthesis protein PurH from Cereibacter sphaeroides (strain ATCC 17025 / ATH 2.4.3) (Rhodobacter sphaeroides).